The primary structure comprises 379 residues: UPF0754 membrane protein ABC1518 (379 aa).

The next 2 helical transmembrane spans lie at 1-21 (MHWI…GAAT) and 358-378 (LLGG…VHFF).

Belongs to the UPF0754 family.

Its subcellular location is the cell membrane. The sequence is that of UPF0754 membrane protein ABC1518 from Shouchella clausii (strain KSM-K16) (Alkalihalobacillus clausii).